The following is a 482-amino-acid chain: Putative dipeptidase NECHADRAFT_87110 (482 aa).

Positions 1–21 (MADTQTPNLQNTAEGDANTSA) are enriched in polar residues. The segment at 1 to 24 (MADTQTPNLQNTAEGDANTSAENE) is disordered. A glycan (N-linked (GlcNAc...) asparagine) is linked at N18. Residues 41–61 (WLRYPFLVAGIALFLGPFSFF) form a helical membrane-spanning segment. Residues H90, D92, and E201 each coordinate Zn(2+). A disulfide bridge links C141 with C230. H228 serves as a coordination point for substrate. Residues H272 and H293 each coordinate Zn(2+). Substrate is bound by residues R304 and D364.

It belongs to the metallo-dependent hydrolases superfamily. Peptidase M19 family. Zn(2+) is required as a cofactor.

The protein resides in the membrane. It catalyses the reaction an L-aminoacyl-L-amino acid + H2O = 2 an L-alpha-amino acid. Functionally, hydrolyzes a wide range of dipeptides. The chain is Putative dipeptidase NECHADRAFT_87110 from Fusarium vanettenii (strain ATCC MYA-4622 / CBS 123669 / FGSC 9596 / NRRL 45880 / 77-13-4) (Fusarium solani subsp. pisi).